Consider the following 192-residue polypeptide: MTHYILLIIGTALINNFVLVKFLGLCPFMGVSKKIETAVGMGLATMFVLTVASLCAYLVDHYILIPLNATFLRTLVFILVIAVVVQFTEMAINKTSPTLYRLLGIFLPLITTNCAVLGVALLNVNLAHNLTESVVYGFGASLGFSLVLVLFAALRERLVAADIPATFRGSSIALITAGLMSLAFMGFTGLVK.

Helical transmembrane passes span 5–25 (ILLI…FLGL), 39–59 (VGMG…AYLV), 63–83 (ILIP…VIAV), 102–122 (LLGI…VALL), 134–154 (VVYG…FAAL), and 171–191 (SIAL…TGLV).

The protein belongs to the NqrDE/RnfAE family. In terms of assembly, the complex is composed of six subunits: RnfA, RnfB, RnfC, RnfD, RnfE and RnfG.

The protein localises to the cell inner membrane. Functionally, part of a membrane-bound complex that couples electron transfer with translocation of ions across the membrane. This is Ion-translocating oxidoreductase complex subunit A from Haemophilus influenzae (strain ATCC 51907 / DSM 11121 / KW20 / Rd).